The chain runs to 35 residues: Mu-theraphotoxin-Hhn1a (35 aa).

Intrachain disulfides connect Cys2-Cys17, Cys9-Cys24, and Cys16-Cys31.

Belongs to the neurotoxin 10 (Hwtx-1) family. 22 (Htx-4) subfamily. In terms of assembly, monomer. Expressed by the venom gland.

Its subcellular location is the secreted. Its function is as follows. Inhibits selectively tetrodotoxin-sensitive voltage-gated sodium channels (Nav). Does not act by binding to receptor site 3 to slow the inactivation kinetics of sodium currents. This chain is Mu-theraphotoxin-Hhn1a, found in Cyriopagopus hainanus (Chinese bird spider).